Reading from the N-terminus, the 38-residue chain is Putative defensin-like protein 105 (38 aa).

3 disulfides stabilise this stretch: cysteine 5/cysteine 27, cysteine 13/cysteine 33, and cysteine 17/cysteine 34.

Belongs to the DEFL family.

In Arabidopsis thaliana (Mouse-ear cress), this protein is Putative defensin-like protein 105.